The primary structure comprises 589 residues: V-type ATP synthase alpha chain (589 aa).

ATP is bound at residue 232-239 (GPFGSGKT).

The protein belongs to the ATPase alpha/beta chains family.

The enzyme catalyses ATP + H2O + 4 H(+)(in) = ADP + phosphate + 5 H(+)(out). Functionally, produces ATP from ADP in the presence of a proton gradient across the membrane. The V-type alpha chain is a catalytic subunit. The chain is V-type ATP synthase alpha chain from Acetivibrio thermocellus (strain ATCC 27405 / DSM 1237 / JCM 9322 / NBRC 103400 / NCIMB 10682 / NRRL B-4536 / VPI 7372) (Clostridium thermocellum).